The following is a 1160-amino-acid chain: Pesticidal crystal protein Cry1Db (1160 aa).

It belongs to the delta endotoxin family.

In terms of biological role, promotes colloidosmotic lysis by binding to the midgut epithelial cells of insects. The polypeptide is Pesticidal crystal protein Cry1Db (cry1Db) (Bacillus thuringiensis).